The chain runs to 408 residues: Glucose-1-phosphate adenylyltransferase (408 aa).

Alpha-D-glucose 1-phosphate is bound by residues tyrosine 100, glycine 165, 180 to 181, and serine 198; that span reads EK.

The protein belongs to the bacterial/plant glucose-1-phosphate adenylyltransferase family. Homotetramer.

The enzyme catalyses alpha-D-glucose 1-phosphate + ATP + H(+) = ADP-alpha-D-glucose + diphosphate. It functions in the pathway glycan biosynthesis; glycogen biosynthesis. In terms of biological role, involved in the biosynthesis of ADP-glucose, a building block required for the elongation reactions to produce glycogen. Catalyzes the reaction between ATP and alpha-D-glucose 1-phosphate (G1P) to produce pyrophosphate and ADP-Glc. The polypeptide is Glucose-1-phosphate adenylyltransferase (Cutibacterium acnes (strain DSM 16379 / KPA171202) (Propionibacterium acnes)).